An 879-amino-acid chain; its full sequence is Alanine--tRNA ligase (879 aa).

4 residues coordinate Zn(2+): H566, H570, C668, and H672.

It belongs to the class-II aminoacyl-tRNA synthetase family. The cofactor is Zn(2+).

The protein resides in the cytoplasm. It catalyses the reaction tRNA(Ala) + L-alanine + ATP = L-alanyl-tRNA(Ala) + AMP + diphosphate. Catalyzes the attachment of alanine to tRNA(Ala) in a two-step reaction: alanine is first activated by ATP to form Ala-AMP and then transferred to the acceptor end of tRNA(Ala). Also edits incorrectly charged Ser-tRNA(Ala) and Gly-tRNA(Ala) via its editing domain. The chain is Alanine--tRNA ligase from Clostridium novyi (strain NT).